Here is a 565-residue protein sequence, read N- to C-terminus: Proline--tRNA ligase (565 aa).

The protein belongs to the class-II aminoacyl-tRNA synthetase family. ProS type 1 subfamily. Homodimer.

Its subcellular location is the cytoplasm. It carries out the reaction tRNA(Pro) + L-proline + ATP = L-prolyl-tRNA(Pro) + AMP + diphosphate. Its function is as follows. Catalyzes the attachment of proline to tRNA(Pro) in a two-step reaction: proline is first activated by ATP to form Pro-AMP and then transferred to the acceptor end of tRNA(Pro). As ProRS can inadvertently accommodate and process non-cognate amino acids such as alanine and cysteine, to avoid such errors it has two additional distinct editing activities against alanine. One activity is designated as 'pretransfer' editing and involves the tRNA(Pro)-independent hydrolysis of activated Ala-AMP. The other activity is designated 'posttransfer' editing and involves deacylation of mischarged Ala-tRNA(Pro). The misacylated Cys-tRNA(Pro) is not edited by ProRS. The polypeptide is Proline--tRNA ligase (Francisella tularensis subsp. tularensis (strain WY96-3418)).